Consider the following 566-residue polypeptide: Membrane protein insertase YidC (566 aa).

Residues 7 to 27 (ILIVALAIVSYVMVLKWNQDY) traverse the membrane as a helical segment. The tract at residues 38-72 (ASSTTAPGLPDAPTGTSAANDDIPRAASDTTAPAE) is disordered. The next 5 membrane-spanning stretches (helical) occupy residues 347 to 367 (LELT…FWLL), 373 to 393 (LVGN…GIFF), 443 to 463 (LGGC…YWVL), 474 to 494 (FMLW…PIIM), and 521 to 541 (PIIF…YWVV).

The protein belongs to the OXA1/ALB3/YidC family. Type 1 subfamily. As to quaternary structure, interacts with the Sec translocase complex via SecD. Specifically interacts with transmembrane segments of nascent integral membrane proteins during membrane integration.

It localises to the cell inner membrane. Its function is as follows. Required for the insertion and/or proper folding and/or complex formation of integral membrane proteins into the membrane. Involved in integration of membrane proteins that insert both dependently and independently of the Sec translocase complex, as well as at least some lipoproteins. Aids folding of multispanning membrane proteins. This chain is Membrane protein insertase YidC, found in Pseudomonas fluorescens (strain ATCC BAA-477 / NRRL B-23932 / Pf-5).